Here is a 485-residue protein sequence, read N- to C-terminus: MSVPLLKIGVVLSTMAMITNWMSQTLPSLVGLNTTKLSAAGGGTLDRSTGVLPTNPEESWQVYSSAQDSEGRCICTVVAPQQTMCSRDARTKQLRQLLEKVQNMSQSIEVLDRRTQRDLQYVEKMENQMKGLESKFKQVEESHKQHLARQFKAIKAKMDELRPLIPVLEEYKADAKLVLQFKEEVQNLTSVLNELQEEIGAYDYDELQSRVSNLEERLRACMQKLACGKLTGISDPVTVKTSGSRFGSWMTDPLAPEGDNRVWYMDGYHNNRFVREYKSMVDFMNTDNFTSHRLPHPWSGTGQVVYNGSIYFNKFQSHIIIRFDLKTETILKTRSLDYAGYNNMYHYAWGGHSDIDLMVDESGLWAVYATNQNAGNIVVSRLDPVSLQTLQTWNTSYPKRSAGEAFIICGTLYVTNGYSGGTKVHYAYQTNASTYEYIDIPFQNKYSHISMLDYNPKDRALYAWNNGHQILYNVTLFHVIRSDEL.

A signal peptide spans 1 to 16; that stretch reads MSVPLLKIGVVLSTMA. N-linked (GlcNAc...) asparagine glycans are attached at residues Asn-33, Asn-103, Asn-187, Asn-288, Asn-307, Asn-394, Asn-431, and Asn-473. A coiled-coil region spans residues 87–225; that stretch reads RDARTKQLRQ…ERLRACMQKL (139 aa). An Olfactomedin-like domain is found at 226–478; that stretch reads ACGKLTGISD…QILYNVTLFH (253 aa). Residues Cys-227 and Cys-409 are joined by a disulfide bond.

As to quaternary structure, homotetramer; disulfide-linked. Dimer of dimers, giving rise to a V-shaped homotretramer. Isoform 1 and isoform 3 interact with RTN4R. Identified in a complex with RTN4R and LINGO1. Peripherally associated with AMPAR complex. AMPAR complex consists of an inner core made of 4 pore-forming GluA/GRIA proteins (GRIA1, GRIA2, GRIA3 and GRIA4) and 4 major auxiliary subunits arranged in a twofold symmetry. One of the two pairs of distinct binding sites is occupied either by CNIH2, CNIH3 or CACNG2, CACNG3. The other harbors CACNG2, CACNG3, CACNG4, CACNG8 or GSG1L. This inner core of AMPAR complex is complemented by outer core constituents binding directly to the GluA/GRIA proteins at sites distinct from the interaction sites of the inner core constituents. Outer core constituents include at least PRRT1, PRRT2, CKAMP44/SHISA9, FRRS1L and NRN1. The proteins of the inner and outer core serve as a platform for other, more peripherally associated AMPAR constituents, including OLFM1. Alone or in combination, these auxiliary subunits control the gating and pharmacology of the AMPAR complex and profoundly impact their biogenesis and protein processing. Interacts with OLFM2.

Its subcellular location is the secreted. It is found in the synapse. It localises to the endoplasmic reticulum. The protein localises to the cell projection. The protein resides in the axon. Its subcellular location is the perikaryon. Contributes to the regulation of axonal growth in the embryonic and adult central nervous system by inhibiting interactions between RTN4R and LINGO1. Inhibits RTN4R-mediated axon growth cone collapse. May play an important role in regulating the production of neural crest cells by the neural tube. May be required for normal responses to olfactory stimuli. This chain is Noelin (OLFM1), found in Homo sapiens (Human).